Consider the following 427-residue polypeptide: Trigger factor (427 aa).

The region spanning 163–248 is the PPIase FKBP-type domain; that stretch reads GDTVVIDFVG…VHEVKAKEVP (86 aa).

Belongs to the FKBP-type PPIase family. Tig subfamily.

It localises to the cytoplasm. The enzyme catalyses [protein]-peptidylproline (omega=180) = [protein]-peptidylproline (omega=0). Its function is as follows. Involved in protein export. Acts as a chaperone by maintaining the newly synthesized protein in an open conformation. Functions as a peptidyl-prolyl cis-trans isomerase. This Streptococcus equi subsp. equi (strain 4047) protein is Trigger factor.